We begin with the raw amino-acid sequence, 365 residues long: 5-hydroxytryptamine receptor 1E (365 aa).

The Extracellular segment spans residues 1-21; sequence MNITNCTTEASMAIRPKTITE. 2 N-linked (GlcNAc...) asparagine glycosylation sites follow: N2 and N5. A helical transmembrane segment spans residues 22–45; sequence KMLICMTLVVITTLTTLLNLAVIM. The Cytoplasmic segment spans residues 46–59; it reads AIGTTKKLHQPANY. Residues 60 to 84 form a helical membrane-spanning segment; it reads LICSLAVTDLLVAVLVMPLSIIYIV. Residues 85–92 are Extracellular-facing; it reads MDRWKLGY. Residues 93–118 form a helical membrane-spanning segment; the sequence is FLCEVWLSVDMTCCTCSILHLCVIAL. An intrachain disulfide couples C95 to C173. The serotonin site is built by D102 and C106. Positions 119 to 121 match the DRY motif; important for ligand-induced conformation changes motif; the sequence is DRY. At 119-138 the chain is on the cytoplasmic side; that stretch reads DRYWAITNAIEYARKRTAKR. A helical membrane pass occupies residues 139 to 157; the sequence is AALMILTVWTISIFISMPP. The Extracellular portion of the chain corresponds to 158–179; the sequence is LFWRSHRRLSPPPSQCTIQHDH. Residues 180–203 traverse the membrane as a helical segment; the sequence is VIYTIYSTLGAFYIPLTLILILYY. Residues 204-291 are Cytoplasmic-facing; that stretch reads RIYHAAKSLY…SSTRERKAAR (88 aa). Residues 292–316 form a helical membrane-spanning segment; that stretch reads ILGLILGAFILSWLPFFIKELIVGL. The Extracellular portion of the chain corresponds to 317-322; the sequence is SIYTVS. A helical membrane pass occupies residues 323 to 345; sequence SEVADFLTWLGYVNSLINPLLYT. Residues 340–344 carry the NPxxY motif; important for ligand-induced conformation changes and signaling motif; it reads NPLLY. At 346-365 the chain is on the cytoplasmic side; it reads SFNEDFKLAFKKLIRCREHT.

This sequence belongs to the G-protein coupled receptor 1 family. As to expression, detected in brain.

The protein localises to the cell membrane. G-protein coupled receptor for 5-hydroxytryptamine (serotonin). Also functions as a receptor for various alkaloids and psychoactive substances. Ligand binding causes a conformation change that triggers signaling via guanine nucleotide-binding proteins (G proteins) and modulates the activity of downstream effectors, such as adenylate cyclase. HTR1E is coupled to G(i)/G(o) G alpha proteins and mediates inhibitory neurotransmission by inhibiting adenylate cyclase activity. This Homo sapiens (Human) protein is 5-hydroxytryptamine receptor 1E.